We begin with the raw amino-acid sequence, 555 residues long: CTP synthase (555 aa).

The amidoligase domain stretch occupies residues 1–271 (MVKRGKKTKY…DDKLAELFNI (271 aa)). Ser-19 contributes to the CTP binding site. Residue Ser-19 participates in UTP binding. ATP-binding positions include 20-25 (SLGKGL) and Asp-77. Residues Asp-77 and Glu-145 each contribute to the Mg(2+) site. CTP-binding positions include 152–154 (DIE), 192–197 (KTKPTQ), and Lys-228. UTP contacts are provided by residues 192 to 197 (KTKPTQ) and Lys-228. One can recognise a Glutamine amidotransferase type-1 domain in the interval 297–537 (RIGIVGKYVE…VKAALEHRDA (241 aa)). Position 358 (Gly-358) interacts with L-glutamine. The Nucleophile; for glutamine hydrolysis role is filled by Cys-385. Residues 386–389 (LGLQ), Glu-409, and Arg-466 contribute to the L-glutamine site. Active-site residues include His-510 and Glu-512. The interval 536 to 555 (DAQQRQPSAEVKKLPVGKNG) is disordered.

This sequence belongs to the CTP synthase family. As to quaternary structure, homotetramer.

It catalyses the reaction UTP + L-glutamine + ATP + H2O = CTP + L-glutamate + ADP + phosphate + 2 H(+). The catalysed reaction is L-glutamine + H2O = L-glutamate + NH4(+). The enzyme catalyses UTP + NH4(+) + ATP = CTP + ADP + phosphate + 2 H(+). The protein operates within pyrimidine metabolism; CTP biosynthesis via de novo pathway; CTP from UDP: step 2/2. Its activity is regulated as follows. Allosterically activated by GTP, when glutamine is the substrate; GTP has no effect on the reaction when ammonia is the substrate. The allosteric effector GTP functions by stabilizing the protein conformation that binds the tetrahedral intermediate(s) formed during glutamine hydrolysis. Inhibited by the product CTP, via allosteric rather than competitive inhibition. Catalyzes the ATP-dependent amination of UTP to CTP with either L-glutamine or ammonia as the source of nitrogen. Regulates intracellular CTP levels through interactions with the four ribonucleotide triphosphates. This Anaeromyxobacter dehalogenans (strain 2CP-C) protein is CTP synthase.